Reading from the N-terminus, the 261-residue chain is Acetylglutamate kinase (261 aa).

Substrate contacts are provided by residues 45 to 46 (GG), Arg-67, and Asn-162.

This sequence belongs to the acetylglutamate kinase family. ArgB subfamily.

It is found in the cytoplasm. The catalysed reaction is N-acetyl-L-glutamate + ATP = N-acetyl-L-glutamyl 5-phosphate + ADP. The protein operates within amino-acid biosynthesis; L-arginine biosynthesis; N(2)-acetyl-L-ornithine from L-glutamate: step 2/4. In terms of biological role, catalyzes the ATP-dependent phosphorylation of N-acetyl-L-glutamate. This is Acetylglutamate kinase from Bacteroides fragilis (strain ATCC 25285 / DSM 2151 / CCUG 4856 / JCM 11019 / LMG 10263 / NCTC 9343 / Onslow / VPI 2553 / EN-2).